We begin with the raw amino-acid sequence, 145 residues long: Large ribosomal subunit protein bL9 (145 aa).

Belongs to the bacterial ribosomal protein bL9 family.

Its function is as follows. Binds to the 23S rRNA. The polypeptide is Large ribosomal subunit protein bL9 (Ureaplasma parvum serovar 3 (strain ATCC 700970)).